The following is a 272-amino-acid chain: Undecaprenyl-diphosphatase (272 aa).

7 helical membrane passes run 2 to 22 (FDIIKAVIIGIVEGLTEFLPI), 43 to 63 (FINMFEYVIQFGAILAVILLY), 82 to 102 (WQLWAKVIIAVLPSVVVGLPL), 110 to 130 (LHTPLVVATTLIIYGVLFIIL), 185 to 205 (YVATEFSFFLAIPTMVGVSIL), 224 to 244 (VLMTGSIVSFLVAIVAIKWLL), and 252 to 272 (FKPFGWYRIALGAIVLLVMFI).

The protein belongs to the UppP family.

It localises to the cell membrane. The enzyme catalyses di-trans,octa-cis-undecaprenyl diphosphate + H2O = di-trans,octa-cis-undecaprenyl phosphate + phosphate + H(+). Its function is as follows. Catalyzes the dephosphorylation of undecaprenyl diphosphate (UPP). Confers resistance to bacitracin. In Lacticaseibacillus paracasei (strain ATCC 334 / BCRC 17002 / CCUG 31169 / CIP 107868 / KCTC 3260 / NRRL B-441) (Lactobacillus paracasei), this protein is Undecaprenyl-diphosphatase.